Consider the following 161-residue polypeptide: Nucleotide-binding protein Csal_2524 (161 aa).

This sequence belongs to the YajQ family.

Functionally, nucleotide-binding protein. The protein is Nucleotide-binding protein Csal_2524 of Chromohalobacter salexigens (strain ATCC BAA-138 / DSM 3043 / CIP 106854 / NCIMB 13768 / 1H11).